We begin with the raw amino-acid sequence, 385 residues long: UPF0764 protein C16orf89 homolog (385 aa).

The N-terminal stretch at 1 to 20 (MARLGLLLLLLLALPPHFSS) is a signal peptide. Residues 344–385 (AHPEYYPNHGDPYSSSQSPASNYQDGAAGPDVQRTGRPLSVS) form a disordered region. The segment covering 356 to 367 (YSSSQSPASNYQ) has biased composition (polar residues).

Belongs to the UPF0764 family. In terms of assembly, homodimer. In terms of processing, glycosylated. In terms of tissue distribution, predominantly expressed in thyroid tissue.

It localises to the secreted. The sequence is that of UPF0764 protein C16orf89 homolog from Mus musculus (Mouse).